Consider the following 179-residue polypeptide: MITLDVIKSDGSSKTCTHLKKIIKDHSGKVLIALKLILALLTFFTITITINYIKVENNLQICQSKTESDKEDSPSNTTSVTTKTTLDHDITQYFKRLIQRYTDSVINKDTCWKISRNQCTNITTYKFLCFKPEDSKINSCDRLTDLCRNKSKSAAEAYHTVECHCIYTIEWKCYHHSID.

At 1 to 29 (MITLDVIKSDGSSKTCTHLKKIIKDHSGK) the chain is on the intravirion side. The helical; Signal-anchor for type II membrane protein transmembrane segment at 30 to 50 (VLIALKLILALLTFFTITITI) threads the bilayer. Topologically, residues 51–179 (NYIKVENNLQ…EWKCYHHSID (129 aa)) are virion surface. Residues N76, N121, and N149 are each glycosylated (N-linked (GlcNAc...) asparagine; by host).

The protein belongs to the metapneumovirus small hydrophobic protein family. As to quaternary structure, homooligomer. Interacts with glycoprotein G.

It localises to the virion membrane. The protein localises to the host cell membrane. Functionally, viroporin that forms a ion channel probably displaying low ion selectivity. Plays a role in counteracting host innate immunity by inhibiting TLR7/MyD88/TRAF6 signaling and STAT1 phosphorylation, leading to down-regulation of type-I IFN. This Homo sapiens (Human) protein is Small hydrophobic protein (SH).